We begin with the raw amino-acid sequence, 303 residues long: Crk-like protein (303 aa).

The region spanning 14 to 102 is the SH2 domain; that stretch reads WYMGPVSRQE…LDTTTLIEPA (89 aa). The SH3 1 domain occupies 123–183; it reads DNLEYVRTLY…PVPYVEKLVR (61 aa). 2 positions are modified to phosphotyrosine: tyrosine 127 and tyrosine 207. The tract at residues 184–234 is disordered; the sequence is SSPHGKHGNRNSNSYGIPEPAHAYAQPQTTTPLPAVSGSPGAAITPLPSTQ. Residues 235 to 296 form the SH3 2 domain; the sequence is NGPVFAKAIQ…PFTHVKIFDP (62 aa).

It belongs to the CRK family. Interacts with tyrosine-phosphorylated EPOR and INPP5D/SHIP1. Interacts with DOCK2 and DOCK5 via its first SH3 domain. Interacts with phosphorylated CBLB and IRS4. Interacts with BCAR1/CAS and NEDD9/HEF1.

In terms of biological role, may mediate the transduction of intracellular signals. The chain is Crk-like protein (CRKL) from Homo sapiens (Human).